We begin with the raw amino-acid sequence, 583 residues long: Putative fatty-acid--CoA ligase fadD25 (583 aa).

The next 3 helical transmembrane spans lie at Tyr-77 to Pro-97, Val-109 to Val-129, and Phe-229 to Ile-249. Positions Ile-353–Thr-375 are disordered.

This sequence belongs to the ATP-dependent AMP-binding enzyme family.

The protein localises to the cell membrane. In Mycobacterium tuberculosis (strain CDC 1551 / Oshkosh), this protein is Putative fatty-acid--CoA ligase fadD25 (fadD25).